The primary structure comprises 248 residues: Large ribosomal subunit protein uL29m (248 aa).

2 disordered regions span residues 77–107 (VSKYPLPRPVKPKEQEKRPSNPKHGLWGFFG) and 223–248 (AYEPPALDVEEPKGEASDSVKTPPSS).

The protein belongs to the universal ribosomal protein uL29 family. In terms of assembly, component of the mitochondrial large ribosomal subunit. Mature mitochondrial ribosomes consist of a small (37S) and a large (54S) subunit. The 37S subunit contains at least 33 different proteins and 1 molecule of RNA (15S). The 54S subunit contains at least 45 different proteins and 1 molecule of RNA (21S).

It localises to the mitochondrion. The sequence is that of Large ribosomal subunit protein uL29m (MRPL4) from Ajellomyces capsulatus (strain NAm1 / WU24) (Darling's disease fungus).